The primary structure comprises 306 residues: Probable cobalamin biosynthesis protein CobD (306 aa).

6 consecutive transmembrane segments (helical) span residues 17-37, 54-74, 88-108, 155-175, 207-227, and 286-306; these read IGEPPEKVHPVIFIGKLIIFF, LFGFFNVILVLAIVFFMAYEI, ISLYSIILSFSIGHKSLIEFS, ITDSIIAPLIYVAIFGLPGAF, ILNFIPSRIAGMLLIITAPFY, and SLKAVDYSVLLFLIIYTVLLM.

The protein belongs to the CobD/CbiB family.

Its subcellular location is the cell membrane. It functions in the pathway cofactor biosynthesis; adenosylcobalamin biosynthesis. In terms of biological role, converts cobyric acid to cobinamide by the addition of aminopropanol on the F carboxylic group. This is Probable cobalamin biosynthesis protein CobD from Methanococcus maripaludis (strain C5 / ATCC BAA-1333).